Reading from the N-terminus, the 201-residue chain is Receptor expression-enhancing protein 1 (201 aa).

The next 2 helical transmembrane spans lie at 1-21 (MVSW…YPAY) and 35-55 (YVKW…ETFT). At serine 152 the chain carries Phosphoserine. The disordered stretch occupies residues 158–201 (TIRGDGAPAPSGPPPPGTGRSSGKHSQPKMSRSASESAGSSGTA). The span at 188–201 (SRSASESAGSSGTA) shows a compositional bias: low complexity.

It belongs to the DP1 family. As to quaternary structure, interacts with OLFR992. Interacts with SPAST and ATL1. Interacts (via C-terminus) with microtubules. Interacts with ZFYVE27. As to expression, detected in olfactory sensory neurons of the olfactory epithelium, and in total brain.

The protein localises to the membrane. It localises to the mitochondrion membrane. The protein resides in the endoplasmic reticulum. Its function is as follows. Required for endoplasmic reticulum (ER) network formation, shaping and remodeling; it links ER tubules to the cytoskeleton. May also enhance the cell surface expression of odorant receptors. The polypeptide is Receptor expression-enhancing protein 1 (Reep1) (Mus musculus (Mouse)).